Reading from the N-terminus, the 451-residue chain is UDP-N-acetylmuramoylalanine--D-glutamate ligase (451 aa).

118–124 (GTKGKST) serves as a coordination point for ATP.

This sequence belongs to the MurCDEF family.

It is found in the cytoplasm. The catalysed reaction is UDP-N-acetyl-alpha-D-muramoyl-L-alanine + D-glutamate + ATP = UDP-N-acetyl-alpha-D-muramoyl-L-alanyl-D-glutamate + ADP + phosphate + H(+). It participates in cell wall biogenesis; peptidoglycan biosynthesis. Its function is as follows. Cell wall formation. Catalyzes the addition of glutamate to the nucleotide precursor UDP-N-acetylmuramoyl-L-alanine (UMA). This is UDP-N-acetylmuramoylalanine--D-glutamate ligase from Borreliella afzelii (strain PKo) (Borrelia afzelii).